The following is a 547-amino-acid chain: Chaperonin GroEL 1 (547 aa).

ATP is bound by residues Thr-30–Pro-33, Lys-51, Asp-87–Thr-91, Gly-415, and Asp-496.

The protein belongs to the chaperonin (HSP60) family. In terms of assembly, forms a cylinder of 14 subunits composed of two heptameric rings stacked back-to-back. Interacts with the co-chaperonin GroES.

It localises to the cytoplasm. It carries out the reaction ATP + H2O + a folded polypeptide = ADP + phosphate + an unfolded polypeptide.. Its function is as follows. Together with its co-chaperonin GroES, plays an essential role in assisting protein folding. The GroEL-GroES system forms a nano-cage that allows encapsulation of the non-native substrate proteins and provides a physical environment optimized to promote and accelerate protein folding. In Rhodopseudomonas palustris (strain BisB5), this protein is Chaperonin GroEL 1.